The sequence spans 2258 residues: Probable serine/threonine-protein kinase ifkA (2258 aa).

Disordered stretches follow at residues 43-108 (RVNS…HQMG) and 189-308 (EMNN…KEND). Residues 45 to 57 (NSSDDINNNNNNN) show a composition bias toward low complexity. Acidic residues predominate over residues 58-100 (NDDDDDNDDYDDSDDENSDSDYDDYDDSDDENSDDEFYSDDED). The segment covering 191-301 (NNLTNSNNSN…NKELIDNNNN (111 aa)) has biased composition (low complexity). A coiled-coil region spans residues 273-309 (NNNNNISNNKINKINNNNNNKELIDNNNNNKDKENDL). Residues 319–691 (WKKGSCIERK…AGILLKHPFL (373 aa)) form the Protein kinase 1 domain. ATP-binding positions include 325–333 (IERKSNYSV) and K348. Residues 358–398 (SSSSLTSLSNSNNNNSNNNNNNNNNNNNNNNNNNNNNNNNN) are disordered. Positions 359–398 (SSSLTSLSNSNNNNSNNNNNNNNNNNNNNNNNNNNNNNNN) are enriched in low complexity. The Proton acceptor role is filled by D498. Disordered stretches follow at residues 741–768 (KSQTPNNNNDNNNLASSNELLSSSNGSN) and 782–870 (PLAT…MTPL). Low complexity predominate over residues 746–768 (NNNNDNNNLASSNELLSSSNGSN). Positions 782–791 (PLATSSSLDN) are enriched in polar residues. A compositionally biased stretch (pro residues) spans 793–805 (TPPPSRPISPKPS). The segment covering 841 to 870 (PQQNFNTPPTTTTTTTTPTATPTTPTMTPL) has biased composition (low complexity). In terms of domain architecture, Protein kinase 2 spans 894 to 1482 (FEEIEMIGKG…TKQLLESGLL (589 aa)). Residues 900–908 (IGKGGFGVV) and K923 contribute to the ATP site. The segment covering 1053–1094 (TLSSSNTSSSSSLLSNNKSKILNTSKSTSTNTSTSTSTSNTN) has biased composition (low complexity). Positions 1053–1259 (TLSSSNTSSS…SSSRKKPPKE (207 aa)) are disordered. Residues 1095–1106 (KNKKISKKKKSK) are compositionally biased toward basic residues. Over residues 1156–1185 (NNNNNNDNNNNYHSDNESDSFSGSISMSDG) the composition is skewed to low complexity. The span at 1206-1233 (DENENDDDDEEDDDDEYDEEDDDYETFD) shows a compositional bias: acidic residues. Positions 1242-1251 (SNNSKLSTSS) are enriched in low complexity. Catalysis depends on D1313, which acts as the Proton acceptor. Disordered stretches follow at residues 1343–1370 (KSDDLNSSTSNTANNINLSSSTNSTAQQ) and 2048–2104 (GSGG…QQTS). The segment covering 1347–1368 (LNSSTSNTANNINLSSSTNSTA) has biased composition (low complexity). The segment covering 2048–2072 (GSGGSGGSGGGSSMSSGGGGGGNSN) has biased composition (gly residues). The segment covering 2085–2099 (SNQSTSSSGNSNNSN) has biased composition (low complexity).

It belongs to the protein kinase superfamily. Ser/Thr protein kinase family.

It catalyses the reaction L-seryl-[protein] + ATP = O-phospho-L-seryl-[protein] + ADP + H(+). The enzyme catalyses L-threonyl-[protein] + ATP = O-phospho-L-threonyl-[protein] + ADP + H(+). In terms of biological role, phosphorylates eIF2-alpha, from 1 to 7 hours after the onset of development or during the preaggregation state, resulting in a shift from polysomes to free ribosomes for bulk mRNA. The chain is Probable serine/threonine-protein kinase ifkA (ifkA) from Dictyostelium discoideum (Social amoeba).